The following is a 129-amino-acid chain: Large ribosomal subunit protein bL12 (129 aa).

This sequence belongs to the bacterial ribosomal protein bL12 family. In terms of assembly, homodimer. Part of the ribosomal stalk of the 50S ribosomal subunit. Forms a multimeric L10(L12)X complex, where L10 forms an elongated spine to which 2 to 4 L12 dimers bind in a sequential fashion. Binds GTP-bound translation factors.

Forms part of the ribosomal stalk which helps the ribosome interact with GTP-bound translation factors. Is thus essential for accurate translation. This chain is Large ribosomal subunit protein bL12, found in Treponema denticola (strain ATCC 35405 / DSM 14222 / CIP 103919 / JCM 8153 / KCTC 15104).